The following is a 2111-amino-acid chain: Mycocerosic acid synthase-like polyketide synthase (2111 aa).

The signal sequence occupies residues 1 to 15 (MTQNCVAPVAIIGMA). The N-palmitoyl cysteine moiety is linked to residue cysteine 16. Residue cysteine 16 is the site of S-diacylglycerol cysteine attachment. One can recognise a Ketosynthase family 3 (KS3) domain in the interval 16-428 (CRLPGAINSP…GTNVHAVLEQ (413 aa)). Catalysis depends on cysteine 178, which acts as the Acyl-thioester intermediate; for beta-ketoacyl synthase activity. Active-site for beta-ketoacyl synthase activity residues include histidine 313 and histidine 349. Residues 430–537 (PESPAETAAE…MPQQAVTNDD (108 aa)) form a linker domain (LD) region. Residues 538–837 (RGPVWVFSGQ…LAVFAAMRRQ (300 aa)) are acyltransferase (AT). Serine 629 functions as the Acyl-ester intermediate; for acyltransferase activity in the catalytic mechanism. Residues 896-1176 (PSVSVHPLLG…LSAMGLQLGT (281 aa)) are dehydratase (DH). The tract at residues 901–1025 (HPLLGSHVVL…GDVDAERPAA (125 aa)) is N-terminal hotdog fold. Positions 901–1183 (HPLLGSHVVL…LGTGNSDKAE (283 aa)) constitute a PKS/mFAS DH domain. Residue histidine 934 is the Proton acceptor; for dehydratase activity of the active site. The segment at 1036–1183 (PNRVDGDELR…LGTGNSDKAE (148 aa)) is C-terminal hotdog fold. Catalysis depends on aspartate 1100, which acts as the Proton donor; for dehydratase activity. A pseudo beta-ketoacyl reductase (PsiKR) region spans residues 1215-1391 (SWLVILAGDD…SPEDETAWRD (177 aa)). Residues 1419 to 1743 (EGMRLVVRNP…QHTGKLVIDI (325 aa)) form an enoylreductase (ER) region. The beta-ketoacyl reductase (KR) stretch occupies residues 1765–2008 (GAYVITGGLG…RSPFAELFLA (244 aa)). Residues 1773 to 1776 (LGGL), 1796 to 1799 (SRSA), 1824 to 1825 (DI), and 1902 to 1903 (FS) each bind NADP(+). Positions 2029–2104 (EEWPTHLRRL…QRLCEMLDTD (76 aa)) constitute a Carrier domain. Residue serine 2064 is modified to O-(pantetheine 4'-phosphoryl)serine.

Homodimer.

Its subcellular location is the cell membrane. The protein operates within lipid metabolism; fatty acid biosynthesis. Polyketide synthase involved in the biosynthesis of 2,4-dimethyl-2-eicosenoic acid, a lipid component of the lipooligosaccharides (LOS) which are not located at the bacterial surface but rather in deeper compartments of the cell envelope of M.smegmatis. The polypeptide is Mycocerosic acid synthase-like polyketide synthase (Mycolicibacterium smegmatis (strain ATCC 700084 / mc(2)155) (Mycobacterium smegmatis)).